The chain runs to 387 residues: Phosphoglycerate kinase (387 aa).

Substrate is bound by residues 21–23, Arg36, 59–62, Arg113, and Arg146; these read DLN and HLGR. ATP-binding positions include Lys197, Glu314, and 340–343; that span reads GGDT.

It belongs to the phosphoglycerate kinase family. Monomer.

The protein resides in the cytoplasm. The enzyme catalyses (2R)-3-phosphoglycerate + ATP = (2R)-3-phospho-glyceroyl phosphate + ADP. Its pathway is carbohydrate degradation; glycolysis; pyruvate from D-glyceraldehyde 3-phosphate: step 2/5. The chain is Phosphoglycerate kinase from Marinomonas sp. (strain MWYL1).